We begin with the raw amino-acid sequence, 759 residues long: GTPase-activating protein rrc-1 (759 aa).

Residues 164–243 (PAIAAAVVTK…PRDCVMLIDD (80 aa)) enclose the SH3 domain. A Rho-GAP domain is found at 280-473 (LELTDLYMRT…FFIENSESLF (194 aa)). The segment at 591 to 624 (ARSMRPTSRPPPSPRTRRARFSNGSSNNVQKLNE) is disordered. Residues 612–622 (SNGSSNNVQKL) are compositionally biased toward polar residues.

Expressed in coelomocytes, excretory cells, uterine-seam cells and GLR cells.

Its function is as follows. Functions as a GTPase-activating protein (GAP) for ced-10/rac-1 and CDC42. The protein is GTPase-activating protein rrc-1 (rrc-1) of Caenorhabditis elegans.